Here is a 387-residue protein sequence, read N- to C-terminus: MSRVGIVLLNLGGPERIQDVGPFLYNLFADPEIIRLPIPALQKPLAWLISTLRSNKSQEAYRSIGGGSPLRRITDQQARELQSLLRQRNVDATTYVAMRYWHPFTESAVADMKADGIEQVVVLPLYPHFSISTSGSSFRELQRLRQGDERFAQLPLRAIRSWHDHPGYLKAMAQLMEREIDACVDPSTAHVFFSAHGVPKSYVEEAGDPYQKEIESCAELIMKTLGRDNPWTLAYQSRVGPVEWLQPYTEEALEELGEKGVKELVVVPISFVSEHIETLEEIDIEYREIATEAGVSNFRRVPALDIDPTFIASLADLVETSLAGPEVDLDEAAALPARTKLYPQEKWSWGWNNSSEVWNGRLAMLGFSAFLVELISGHGPLHALGLL.

Positions 196 and 277 each coordinate Fe cation.

It belongs to the ferrochelatase family.

The protein localises to the cytoplasm. The catalysed reaction is heme b + 2 H(+) = protoporphyrin IX + Fe(2+). Its pathway is porphyrin-containing compound metabolism; protoheme biosynthesis; protoheme from protoporphyrin-IX: step 1/1. Catalyzes the ferrous insertion into protoporphyrin IX. The chain is Ferrochelatase from Synechococcus sp. (strain RCC307).